The primary structure comprises 601 residues: MAACGAEERQRTGRLSALSVYRRAAGPGRLERRRRGTPLPAGGKRTKARLRRGAAGGGGPERAAPPQGAAVSDRVERAGSSEAKQGDLKTNPSGPPAKAPAGNLETKSPGGPLTTSVGPRAKAPAGSPEAKPPGDPATSPGGGGVPGLLRRLGRLEDSRRRAAELFRWLVAPAAPEEFARQHWERAPLLVQRGDPGYYAGLFSTADFDAILRSGDVHFGTHLDVTSYAEGVRETHNPVGRALPAVVWDFYQNGCSLRLLSPQAFSTTVWHFLSILQEHFGSMAGANTYLTPPGTQGFAPHYDDIEAFVLQLEGKKHWRVYGPRTSSEALPQFSSANLTQAELGEPLLEVVLEAGDLLYFPRGFIHQADCLPDAHSLHITVSSYQRNSWGDFLEKLLPAALQMALEEDLEYRQGLPMDCLGYMGVANSDAVDARRTAFVEKVQHLIKKLVDYAPIDAAMDQRAKSFLHDCLPPVLTQSEKQLSVYGFPARWQDGGPRNVDIQITKDTEVRLLHHGVVRLCNEEAGVMLYYTTENSRVYHKEEPKYLEIDPEYTDSIEFLLSSYPNHVSVDTLPCDALEDKISLATLLFEKGILTTKKPLVQV.

Over residues 1-11 (MAACGAEERQR) the composition is skewed to basic and acidic residues. The tract at residues 1–149 (MAACGAEERQ…PGGGGVPGLL (149 aa)) is disordered. A compositionally biased stretch (low complexity) spans 61-70 (ERAAPPQGAA). Residues 73-87 (DRVERAGSSEAKQGD) show a composition bias toward basic and acidic residues. Positions 254-399 (CSLRLLSPQA…DFLEKLLPAA (146 aa)) constitute a JmjC domain. Fe cation contacts are provided by H300, D302, and H365.

This sequence belongs to the ROX family. NO66 subfamily. Requires Fe(2+) as cofactor.

It is found in the nucleus. It localises to the nucleolus. The protein localises to the nucleoplasm. It carries out the reaction N(6),N(6)-dimethyl-L-lysyl(36)-[histone H3] + 2 2-oxoglutarate + 2 O2 = L-lysyl(36)-[histone H3] + 2 formaldehyde + 2 succinate + 2 CO2. The enzyme catalyses N(6)-methyl-L-lysyl-[protein] + 2-oxoglutarate + O2 = L-lysyl-[protein] + formaldehyde + succinate + CO2. The catalysed reaction is L-histidyl-[protein] + 2-oxoglutarate + O2 = (3S)-3-hydroxy-L-histidyl-[protein] + succinate + CO2. Its function is as follows. Oxygenase that can act as both a histone lysine demethylase and a ribosomal histidine hydroxylase. Specifically demethylates 'Lys-4' (H3K4me) and 'Lys-36' (H3K36me) of histone H3, thereby playing a central role in histone code. Preferentially demethylates trimethylated H3 'Lys-4' (H3K4me3) and monomethylated H3 'Lys-4' (H3K4me1) residues, while it has weaker activity for dimethylated H3 'Lys-36' (H3K36me2). Also catalyzes demethylation of non-histone proteins. Also catalyzes the hydroxylation of 60S ribosomal protein L8 on 'His-216', thereby playing a role in ribosome biogenesis. This Gallus gallus (Chicken) protein is Ribosomal oxygenase 1 (RIOX1).